A 356-amino-acid chain; its full sequence is S-adenosylmethionine:tRNA ribosyltransferase-isomerase (356 aa).

The protein belongs to the QueA family. As to quaternary structure, monomer.

Its subcellular location is the cytoplasm. The enzyme catalyses 7-aminomethyl-7-carbaguanosine(34) in tRNA + S-adenosyl-L-methionine = epoxyqueuosine(34) in tRNA + adenine + L-methionine + 2 H(+). Its pathway is tRNA modification; tRNA-queuosine biosynthesis. In terms of biological role, transfers and isomerizes the ribose moiety from AdoMet to the 7-aminomethyl group of 7-deazaguanine (preQ1-tRNA) to give epoxyqueuosine (oQ-tRNA). The protein is S-adenosylmethionine:tRNA ribosyltransferase-isomerase of Nitrosospira multiformis (strain ATCC 25196 / NCIMB 11849 / C 71).